Here is a 444-residue protein sequence, read N- to C-terminus: Methionine aminopeptidase 2-1 (444 aa).

The tract at residues Met-1–Asn-92 is disordered. Residues Asn-15–Gly-29 are compositionally biased toward polar residues. Residues Gly-34 to Glu-45 show a composition bias toward acidic residues. The segment covering Ala-59–Gly-73 has biased composition (basic residues). Residue His-197 participates in substrate binding. A divalent metal cation is bound by residues Asp-217, Asp-228, and His-297. His-305 contributes to the substrate binding site. The a divalent metal cation site is built by Glu-330 and Glu-425.

The protein belongs to the peptidase M24A family. Methionine aminopeptidase eukaryotic type 2 subfamily. It depends on Co(2+) as a cofactor. Zn(2+) serves as cofactor. Requires Mn(2+) as cofactor. Fe(2+) is required as a cofactor.

The protein resides in the cytoplasm. It carries out the reaction Release of N-terminal amino acids, preferentially methionine, from peptides and arylamides.. In terms of biological role, cotranslationally removes the N-terminal methionine from nascent proteins. The N-terminal methionine is often cleaved when the second residue in the primary sequence is small and uncharged (Met-Ala-, Cys, Gly, Pro, Ser, Thr, or Val). This Neosartorya fischeri (strain ATCC 1020 / DSM 3700 / CBS 544.65 / FGSC A1164 / JCM 1740 / NRRL 181 / WB 181) (Aspergillus fischerianus) protein is Methionine aminopeptidase 2-1.